Reading from the N-terminus, the 123-residue chain is Large ribosomal subunit protein bL12 (123 aa).

The protein belongs to the bacterial ribosomal protein bL12 family. In terms of assembly, homodimer. Part of the ribosomal stalk of the 50S ribosomal subunit. Forms a multimeric L10(L12)X complex, where L10 forms an elongated spine to which 2 to 4 L12 dimers bind in a sequential fashion. Binds GTP-bound translation factors.

Forms part of the ribosomal stalk which helps the ribosome interact with GTP-bound translation factors. Is thus essential for accurate translation. In Chromobacterium violaceum (strain ATCC 12472 / DSM 30191 / JCM 1249 / CCUG 213 / NBRC 12614 / NCIMB 9131 / NCTC 9757 / MK), this protein is Large ribosomal subunit protein bL12.